A 281-amino-acid polypeptide reads, in one-letter code: Ribosomal protein L11 methyltransferase (281 aa).

S-adenosyl-L-methionine-binding residues include threonine 133, glycine 154, aspartate 175, and asparagine 216.

Belongs to the methyltransferase superfamily. PrmA family.

It localises to the cytoplasm. It carries out the reaction L-lysyl-[protein] + 3 S-adenosyl-L-methionine = N(6),N(6),N(6)-trimethyl-L-lysyl-[protein] + 3 S-adenosyl-L-homocysteine + 3 H(+). In terms of biological role, methylates ribosomal protein L11. This is Ribosomal protein L11 methyltransferase from Campylobacter jejuni subsp. jejuni serotype O:2 (strain ATCC 700819 / NCTC 11168).